The chain runs to 61 residues: Alpha-conotoxin-like PnMGMR-02 (61 aa).

An N-terminal signal peptide occupies residues 1 to 21; the sequence is MGMRMMFTVFLLVVLATTVVS. Residues 22–44 constitute a propeptide that is removed on maturation; it reads FTSDRASDGGNAAASDLIALTIK. 2 disulfides stabilise this stretch: Cys-46/Cys-52 and Cys-47/Cys-60. The interval 48-50 is ser-Xaa-Pro motif, crucial for potent interaction with nAChR; the sequence is SRP. Cys-60 is modified (cysteine amide).

Belongs to the conotoxin A superfamily. In terms of tissue distribution, expressed by the venom duct.

It is found in the secreted. Functionally, alpha-conotoxins act on postsynaptic membranes, they bind to the nicotinic acetylcholine receptors (nAChR) and thus inhibit them. This toxin blocks mammalian nAChRs (alpha-7 &gt; alpha-3/beta-2). This chain is Alpha-conotoxin-like PnMGMR-02, found in Conus pennaceus (Feathered cone).